The sequence spans 356 residues: tRNA N6-adenosine threonylcarbamoyltransferase (356 aa).

His-115 and His-119 together coordinate Fe cation. Residues 138-142, Asp-171, Gly-184, and Asn-283 each bind substrate; that span reads LVSGG. Asp-311 contributes to the Fe cation binding site.

It belongs to the KAE1 / TsaD family. Requires Fe(2+) as cofactor.

It is found in the cytoplasm. It carries out the reaction L-threonylcarbamoyladenylate + adenosine(37) in tRNA = N(6)-L-threonylcarbamoyladenosine(37) in tRNA + AMP + H(+). Required for the formation of a threonylcarbamoyl group on adenosine at position 37 (t(6)A37) in tRNAs that read codons beginning with adenine. Is involved in the transfer of the threonylcarbamoyl moiety of threonylcarbamoyl-AMP (TC-AMP) to the N6 group of A37, together with TsaE and TsaB. TsaD likely plays a direct catalytic role in this reaction. This chain is tRNA N6-adenosine threonylcarbamoyltransferase, found in Prochlorococcus marinus subsp. pastoris (strain CCMP1986 / NIES-2087 / MED4).